A 366-amino-acid chain; its full sequence is Aliphatic nitrilase (366 aa).

The CN hydrolase domain maps to 8 to 282 (FKVAAVQAQP…EGILYADIDL (275 aa)). The active-site Proton acceptor is the glutamate 48. Residue lysine 131 is the Proton donor of the active site. Cysteine 165 (nucleophile) is an active-site residue. The segment at 346–366 (DEQRALPSTHSDETDRATASI) is disordered. Residues 355–366 (HSDETDRATASI) show a composition bias toward basic and acidic residues.

The protein belongs to the carbon-nitrogen hydrolase superfamily. Nitrilase family. In terms of assembly, homodimer.

It carries out the reaction an aliphatic nitrile + 2 H2O = a carboxylate + NH4(+). The polypeptide is Aliphatic nitrilase (nitA) (Rhodococcus rhodochrous).